A 637-amino-acid polypeptide reads, in one-letter code: Extracellular metalloproteinase 10 (637 aa).

The N-terminal stretch at 1–19 (MHGLLLAATLLSLPFNAVA) is a signal peptide. A propeptide spanning residues 20–245 (HVPPTTGLVR…VHNVVDYVAH (226 aa)) is cleaved from the precursor. Asn-282 carries an N-linked (GlcNAc...) asparagine glycan. His-429 contacts Zn(2+). Glu-430 is a catalytic residue. Position 433 (His-433) interacts with Zn(2+). Asn-502 is a glycosylation site (N-linked (GlcNAc...) asparagine).

Belongs to the peptidase M36 family. Zn(2+) serves as cofactor.

It localises to the secreted. Secreted metalloproteinase that allows assimilation of proteinaceous substrates. The chain is Extracellular metalloproteinase 10 (MEP10) from Uncinocarpus reesii (strain UAMH 1704).